The chain runs to 377 residues: UDP-N-acetylglucosamine--N-acetylmuramyl-(pentapeptide) pyrophosphoryl-undecaprenol N-acetylglucosamine transferase (377 aa).

UDP-N-acetyl-alpha-D-glucosamine-binding positions include 29–31, Asn-142, Arg-179, Ser-213, and Gln-308; that span reads TAG.

It belongs to the glycosyltransferase 28 family. MurG subfamily.

The protein resides in the cell membrane. The catalysed reaction is di-trans,octa-cis-undecaprenyl diphospho-N-acetyl-alpha-D-muramoyl-L-alanyl-D-glutamyl-meso-2,6-diaminopimeloyl-D-alanyl-D-alanine + UDP-N-acetyl-alpha-D-glucosamine = di-trans,octa-cis-undecaprenyl diphospho-[N-acetyl-alpha-D-glucosaminyl-(1-&gt;4)]-N-acetyl-alpha-D-muramoyl-L-alanyl-D-glutamyl-meso-2,6-diaminopimeloyl-D-alanyl-D-alanine + UDP + H(+). It participates in cell wall biogenesis; peptidoglycan biosynthesis. Cell wall formation. Catalyzes the transfer of a GlcNAc subunit on undecaprenyl-pyrophosphoryl-MurNAc-pentapeptide (lipid intermediate I) to form undecaprenyl-pyrophosphoryl-MurNAc-(pentapeptide)GlcNAc (lipid intermediate II). The sequence is that of UDP-N-acetylglucosamine--N-acetylmuramyl-(pentapeptide) pyrophosphoryl-undecaprenol N-acetylglucosamine transferase from Saccharopolyspora erythraea (strain ATCC 11635 / DSM 40517 / JCM 4748 / NBRC 13426 / NCIMB 8594 / NRRL 2338).